The primary structure comprises 255 residues: Adenosine 5'-phosphosulfate reductase (255 aa).

The segment at 1-39 (MMTAEVRTPEQGGGPLTTEPRAPRSAPGHADASAPAFGP) is disordered. The [4Fe-4S] cluster site is built by Cys137, Cys138, Cys220, and Cys223. Cys246 serves as the catalytic Nucleophile; cysteine thiosulfonate intermediate.

This sequence belongs to the PAPS reductase family. CysH subfamily. The cofactor is [4Fe-4S] cluster.

Its subcellular location is the cytoplasm. The catalysed reaction is [thioredoxin]-disulfide + sulfite + AMP + 2 H(+) = adenosine 5'-phosphosulfate + [thioredoxin]-dithiol. It participates in sulfur metabolism; hydrogen sulfide biosynthesis; sulfite from sulfate. Catalyzes the formation of sulfite from adenosine 5'-phosphosulfate (APS) using thioredoxin as an electron donor. The polypeptide is Adenosine 5'-phosphosulfate reductase (Deinococcus radiodurans (strain ATCC 13939 / DSM 20539 / JCM 16871 / CCUG 27074 / LMG 4051 / NBRC 15346 / NCIMB 9279 / VKM B-1422 / R1)).